The primary structure comprises 426 residues: MTWFIDRRLNGKNKSTVNRQRFLRRYKAQIKQSISEAINKRSVTDVDSGESVSIPTDDISEPMFHQGRGGLRHRVHPGNDHFIQNDRIERPQDGGGSGSGNGQASQDGEGQDEFVFQISKDEYLDLLFEDLALPNLKKNQHRQLNEYKTHRAGFTSNGVPANISVVRSLQNSLARRTAMTAGKRRELHALEAELETLSSSEPAQLLEEERLRREIAELRAKIEKVPFIDTFDLRYKNYEKRPDPSSQAVMFCLMDVSGSMDQATKDMAKRFYILLYLFLSRTYKNVEVVYIRHHTQAKEVDEHEFFYSQETGGTIVSSALKLMDEVVKERYDPGQWNIYAAQASDGDNWADDSPLCHEILAKKLLPVVRYYSYIEITRRAHQTLWREYEHLQAMFDNFAMQHIRDQDDIYPVFRELFQKQSANQSA.

Residues 78-92 (GNDHFIQNDRIERPQ) are compositionally biased toward basic and acidic residues. The tract at residues 78-108 (GNDHFIQNDRIERPQDGGGSGSGNGQASQDG) is disordered.

Belongs to the UPF0229 family.

This Salmonella arizonae (strain ATCC BAA-731 / CDC346-86 / RSK2980) protein is UPF0229 protein YeaH.